A 199-amino-acid chain; its full sequence is MTHSTDIATLARWMAADFSNQAQAFENPPFYAHIRVCMRPLPWEVLSGVGFFVEQAYDYMLNDPYRLRVLKLMIVGDRIHIENYTVKQEENFYGASRDLNRLQTLTSESLEKLPGCNMIVEWTGNSFKGTVEPGKGCIVVRKGQKTYLDSEFEINEEKFISLDRGRDLETDAHIWGSVAGPFYFVRLHNFADEVKISAE.

It belongs to the CpcT/CpeT biliprotein lyase family.

In terms of biological role, catalyzes the site-selective attachment of phycocyanobilin (PCB) to 'Cys-154' of C-phycocyanin subunit beta (CpcB) and to 'Cys-153' of phycoerythrocyanin subunit beta (PecB). Does not have chromophore lyase activity for ApcA1, ApcA2, ApcB, ApcD, ApcF or PecA. This is Phycocyanobilin lyase CpcT (cpcT1) from Nostoc sp. (strain PCC 7120 / SAG 25.82 / UTEX 2576).